The following is a 234-amino-acid chain: Transcriptional activator protein TraR (234 aa).

Positions 167 to 232 constitute an HTH luxR-type domain; sequence TAEDAAWLDP…HLTALAIRRK (66 aa). A DNA-binding region (H-T-H motif) is located at residues 191–210; sequence MEEIADVEGVKYNSVRVKLR.

This sequence belongs to the autoinducer-regulated transcriptional regulatory protein family.

Positive regulation of conjugal transfer of Ti plasmids. TraR activates target genes in the presence of AAI and also activates traR and traI themselves. The polypeptide is Transcriptional activator protein TraR (traR) (Rhizobium radiobacter (Agrobacterium tumefaciens)).